We begin with the raw amino-acid sequence, 258 residues long: Tryptophan synthase alpha chain (258 aa).

Residues Glu-47 and Asp-58 each act as proton acceptor in the active site.

It belongs to the TrpA family. As to quaternary structure, tetramer of two alpha and two beta chains.

It catalyses the reaction (1S,2R)-1-C-(indol-3-yl)glycerol 3-phosphate + L-serine = D-glyceraldehyde 3-phosphate + L-tryptophan + H2O. It participates in amino-acid biosynthesis; L-tryptophan biosynthesis; L-tryptophan from chorismate: step 5/5. Functionally, the alpha subunit is responsible for the aldol cleavage of indoleglycerol phosphate to indole and glyceraldehyde 3-phosphate. This Bacillus cereus (strain G9842) protein is Tryptophan synthase alpha chain.